The following is a 286-amino-acid chain: Bifunctional protein FolD (286 aa).

Residues 165–167 (GRS) and serine 190 each bind NADP(+).

It belongs to the tetrahydrofolate dehydrogenase/cyclohydrolase family. In terms of assembly, homodimer.

It carries out the reaction (6R)-5,10-methylene-5,6,7,8-tetrahydrofolate + NADP(+) = (6R)-5,10-methenyltetrahydrofolate + NADPH. The enzyme catalyses (6R)-5,10-methenyltetrahydrofolate + H2O = (6R)-10-formyltetrahydrofolate + H(+). It participates in one-carbon metabolism; tetrahydrofolate interconversion. Its function is as follows. Catalyzes the oxidation of 5,10-methylenetetrahydrofolate to 5,10-methenyltetrahydrofolate and then the hydrolysis of 5,10-methenyltetrahydrofolate to 10-formyltetrahydrofolate. This is Bifunctional protein FolD from Paraburkholderia xenovorans (strain LB400).